The sequence spans 191 residues: Cell division protein SepF (191 aa).

The span at 153-178 shows a compositional bias: polar residues; sequence FPEEVSPSNISSKKTSPYSLETNTTP. The interval 153–191 is disordered; the sequence is FPEEVSPSNISSKKTSPYSLETNTTPEPAWGESKLSAFS.

Belongs to the SepF family. Homodimer. Interacts with FtsZ.

It is found in the cytoplasm. Cell division protein that is part of the divisome complex and is recruited early to the Z-ring. Probably stimulates Z-ring formation, perhaps through the cross-linking of FtsZ protofilaments. Its function overlaps with FtsA. The polypeptide is Cell division protein SepF (Prochlorococcus marinus (strain MIT 9515)).